We begin with the raw amino-acid sequence, 448 residues long: Putative carbonic anhydrase 2 (448 aa).

Residues 1–222 (AYRQTENLLY…PAERDVFRII (222 aa)) form the Alpha-carbonic anhydrase domain. Position 19 (His-19) interacts with Zn(2+). 2 N-linked (GlcNAc...) asparagine glycosylation sites follow: Asn-139 and Asn-198. The disordered stretch occupies residues 229–448 (RREEDDERGD…DKGDDKGDDN (220 aa)). The span at 245–280 (DDDDNYDDDDYYNDDYSNDDYYDDDYYYDDYDDDTD) shows a compositional bias: acidic residues. Composition is skewed to basic and acidic residues over residues 281 to 334 (DDHK…DDSG) and 342 to 354 (RDGR…RDRN). Residue Asn-314 is glycosylated (N-linked (GlcNAc...) asparagine). Residues 357-368 (NGNGRENGGVRG) show a composition bias toward gly residues. Over residues 370–379 (GNDRDGRRDN) the composition is skewed to basic and acidic residues. Residue Asn-385 is glycosylated (N-linked (GlcNAc...) asparagine). The segment covering 386 to 421 (GTRRGNGDDRGGRRNEDRGENRRGKDDQERESEDGR) has biased composition (basic and acidic residues). Over residues 422-435 (RRRRRFNGRRRRRG) the composition is skewed to basic residues. Basic and acidic residues predominate over residues 436 to 448 (RGDDKGDDKGDDN).

It belongs to the alpha-carbonic anhydrase family. Component of the acid-insoluble and acid-soluble organic matrix of calcified layers of the shell (at protein level).

The protein resides in the secreted. It carries out the reaction hydrogencarbonate + H(+) = CO2 + H2O. In terms of biological role, reversible hydration of carbon dioxide. In Lottia gigantea (Giant owl limpet), this protein is Putative carbonic anhydrase 2.